The primary structure comprises 495 residues: Cobyric acid synthase (495 aa).

The region spanning 252-439 (RIRIAAPMLS…VHGLFAQDAF (188 aa)) is the GATase cobBQ-type domain. The active-site Nucleophile is Cys334. The active site involves His431.

Belongs to the CobB/CobQ family. CobQ subfamily.

It functions in the pathway cofactor biosynthesis; adenosylcobalamin biosynthesis. Functionally, catalyzes amidations at positions B, D, E, and G on adenosylcobyrinic A,C-diamide. NH(2) groups are provided by glutamine, and one molecule of ATP is hydrogenolyzed for each amidation. The sequence is that of Cobyric acid synthase from Hyphomonas neptunium (strain ATCC 15444).